Reading from the N-terminus, the 396-residue chain is Flavohemoprotein (396 aa).

Positions 1–136 (MLDTQTIAIV…LADVFIQRES (136 aa)) constitute a Globin domain. Position 85 (His85) interacts with heme b. Catalysis depends on charge relay system residues Tyr95 and Glu135. The tract at residues 147–396 (GGWRTLRRFR…YECFGPHKVI (250 aa)) is reductase. In terms of domain architecture, FAD-binding FR-type spans 150-255 (RTLRRFRIIK…APPRGDFFLD (106 aa)). Residues Tyr188 and 204 to 207 (RQYS) each bind FAD. 268-273 (GVGQTP) contributes to the NADP(+) binding site. 389-392 (CFGP) is a binding site for FAD.

Belongs to the globin family. Two-domain flavohemoproteins subfamily. The protein in the C-terminal section; belongs to the flavoprotein pyridine nucleotide cytochrome reductase family. Heme b is required as a cofactor. It depends on FAD as a cofactor.

The enzyme catalyses 2 nitric oxide + NADPH + 2 O2 = 2 nitrate + NADP(+) + H(+). The catalysed reaction is 2 nitric oxide + NADH + 2 O2 = 2 nitrate + NAD(+) + H(+). In terms of biological role, is involved in NO detoxification in an aerobic process, termed nitric oxide dioxygenase (NOD) reaction that utilizes O(2) and NAD(P)H to convert NO to nitrate, which protects the bacterium from various noxious nitrogen compounds. Therefore, plays a central role in the inducible response to nitrosative stress. The protein is Flavohemoprotein of Yersinia pestis.